The following is a 159-amino-acid chain: 2-C-methyl-D-erythritol 2,4-cyclodiphosphate synthase (159 aa).

Asp-10 and His-12 together coordinate a divalent metal cation. 4-CDP-2-C-methyl-D-erythritol 2-phosphate-binding positions include 10 to 12 (DVH) and 36 to 37 (HS). His-44 serves as a coordination point for a divalent metal cation. 4-CDP-2-C-methyl-D-erythritol 2-phosphate contacts are provided by residues 58-60 (DIG), 134-137 (TTTE), Phe-141, and Arg-144.

This sequence belongs to the IspF family. In terms of assembly, homotrimer. A divalent metal cation serves as cofactor.

It carries out the reaction 4-CDP-2-C-methyl-D-erythritol 2-phosphate = 2-C-methyl-D-erythritol 2,4-cyclic diphosphate + CMP. It functions in the pathway isoprenoid biosynthesis; isopentenyl diphosphate biosynthesis via DXP pathway; isopentenyl diphosphate from 1-deoxy-D-xylulose 5-phosphate: step 4/6. Involved in the biosynthesis of isopentenyl diphosphate (IPP) and dimethylallyl diphosphate (DMAPP), two major building blocks of isoprenoid compounds. Catalyzes the conversion of 4-diphosphocytidyl-2-C-methyl-D-erythritol 2-phosphate (CDP-ME2P) to 2-C-methyl-D-erythritol 2,4-cyclodiphosphate (ME-CPP) with a corresponding release of cytidine 5-monophosphate (CMP). The sequence is that of 2-C-methyl-D-erythritol 2,4-cyclodiphosphate synthase from Bacteroides thetaiotaomicron (strain ATCC 29148 / DSM 2079 / JCM 5827 / CCUG 10774 / NCTC 10582 / VPI-5482 / E50).